Reading from the N-terminus, the 347-residue chain is Ribosomal RNA large subunit methyltransferase M (347 aa).

Residues serine 184, 217–220 (APGG), aspartate 236, aspartate 256, and aspartate 272 contribute to the S-adenosyl-L-methionine site. Lysine 301 (proton acceptor) is an active-site residue.

It belongs to the class I-like SAM-binding methyltransferase superfamily. RNA methyltransferase RlmE family. RlmM subfamily. Monomer.

Its subcellular location is the cytoplasm. The catalysed reaction is cytidine(2498) in 23S rRNA + S-adenosyl-L-methionine = 2'-O-methylcytidine(2498) in 23S rRNA + S-adenosyl-L-homocysteine + H(+). Catalyzes the 2'-O-methylation at nucleotide C2498 in 23S rRNA. This is Ribosomal RNA large subunit methyltransferase M from Xanthomonas oryzae pv. oryzae (strain PXO99A).